The primary structure comprises 531 residues: Light-independent protochlorophyllide reductase subunit B (531 aa).

[4Fe-4S] cluster is bound at residue Asp36. Asp291 functions as the Proton donor in the catalytic mechanism. 426–427 (GL) lines the substrate pocket.

It belongs to the ChlB/BchB/BchZ family. Protochlorophyllide reductase is composed of three subunits; ChlL, ChlN and ChlB. Forms a heterotetramer of two ChlB and two ChlN subunits. It depends on [4Fe-4S] cluster as a cofactor.

It carries out the reaction chlorophyllide a + oxidized 2[4Fe-4S]-[ferredoxin] + 2 ADP + 2 phosphate = protochlorophyllide a + reduced 2[4Fe-4S]-[ferredoxin] + 2 ATP + 2 H2O. The protein operates within porphyrin-containing compound metabolism; chlorophyll biosynthesis (light-independent). In terms of biological role, component of the dark-operative protochlorophyllide reductase (DPOR) that uses Mg-ATP and reduced ferredoxin to reduce ring D of protochlorophyllide (Pchlide) to form chlorophyllide a (Chlide). This reaction is light-independent. The NB-protein (ChlN-ChlB) is the catalytic component of the complex. The chain is Light-independent protochlorophyllide reductase subunit B from Prochlorococcus marinus (strain MIT 9211).